The following is a 479-amino-acid chain: GDP-fucose protein O-fucosyltransferase 3 (479 aa).

Over methionine 1–lysine 8 the chain is Cytoplasmic. The chain crosses the membrane as a helical; Signal-anchor for type II membrane protein span at residues leucine 9–glutamate 31. Residues leucine 32–aspartate 479 are Lumenal-facing. Residues asparagine 110 and asparagine 168 are each glycosylated (N-linked (GlcNAc...) asparagine). A disulfide bridge links cysteine 389 with cysteine 392.

Belongs to the glycosyltransferase 10 family. As to expression, expressed in lung, digestive tract, gall bladder, placenta, kidney, uterus and brain. Not detected in spleen, heart, muscle, liver and pancreas.

The protein localises to the endoplasmic reticulum membrane. It is found in the golgi apparatus membrane. It localises to the golgi apparatus. Its subcellular location is the lysosome. It catalyses the reaction L-threonyl-[protein] + GDP-beta-L-fucose = 3-O-(alpha-L-fucosyl)-L-threonyl-[protein] + GDP + H(+). It carries out the reaction L-seryl-[protein] + GDP-beta-L-fucose = 3-O-(alpha-L-fucosyl)-L-seryl-[protein] + GDP + H(+). It participates in protein modification; protein glycosylation. In terms of biological role, protein O-fucosyltransferase that specifically catalyzes O-fucosylation of serine or threonine residues in EMI domains of target proteins, such as MMRN1, MMRN2 and EMID1. Attaches fucose through an O-glycosidic linkage. O-fucosylation of EMI domain-containing proteins may be required for facilitating protein folding and secretion. May also show alpha-(1,3)-fucosyltransferase activity toward the innermost N-acetyl glucosamine (GlcNAc) residue in biantennary N-glycan acceptors. However, this was tested with a library of synthetic substrates and this activity is unsure in vivo. May be involved in biosynthesis of Lewis X-carrying biantennary N-glycans that regulate neuron stem cell self-renewal during brain development. In Homo sapiens (Human), this protein is GDP-fucose protein O-fucosyltransferase 3.